A 116-amino-acid polypeptide reads, in one-letter code: MSATAATAPPAAPAGEGGPPAPPPNLTSNRRLQQTQAQVDEVVDIMRVNVDKVLERDQKLSELDDRADALQAGASQFETSAAKLKRKYWWKNLKMMIILGVICAIILIIIIVYFSS.

A disordered region spans residues 1–33; it reads MSATAATAPPAAPAGEGGPPAPPPNLTSNRRLQ. Residue serine 2 is modified to N-acetylserine. The Cytoplasmic segment spans residues 2–94; it reads SATAATAPPA…KRKYWWKNLK (93 aa). One can recognise a v-SNARE coiled-coil homology domain in the interval 31–91; the sequence is RLQQTQAQVD…AKLKRKYWWK (61 aa). A required for interaction with SEPT8 region spans residues 92–116; the sequence is NLKMMIILGVICAIILIIIIVYFSS. The chain crosses the membrane as a helical; Anchor for type IV membrane protein span at residues 95–114; sequence MMIILGVICAIILIIIIVYF. The Vesicular segment spans residues 115–116; that stretch reads SS.

It belongs to the synaptobrevin family. As to quaternary structure, part of the SNARE core complex containing SNAP25, VAMP2 and STX1A; this complex constitutes the basic catalytic machinery of the complex neurotransmitter release apparatus. Recruited to the SNARE complex following binding of the SNARE complex component STX1A to STXBP1. This complex binds to CPLX1. Interacts with POPDC1 and STX4. Interacts with VAPA and VAPB. Interacts with WDFY2, PRKCZ and PRKCI. Forms a complex with WDFY2 and PRKCZ. Interacts (via N-terminus) with KCNB1 (via N-terminus and C-terminus); stimulates the channel inactivation rate of KCNB1. Interacts with SEPT8; the interaction inhibits interaction of VAMP2 with SYP. Interacts with SYP; the interaction is inhibited by interaction with SEPT8. Interacts with PICALM. Interacts with alpha-synuclein/SNCA. Interacts with STX3. In terms of processing, phosphorylated by PRKCZ in vitro and this phosphorylation is increased in the presence of WDFY2.

It localises to the cytoplasmic vesicle. The protein resides in the secretory vesicle. Its subcellular location is the synaptic vesicle membrane. The protein localises to the cell membrane. In terms of biological role, involved in the targeting and/or fusion of transport vesicles to their target membrane. Major SNARE protein of synaptic vesicles which mediates fusion of synaptic vesicles to release neurotransmitters. Essential for fast vesicular exocytosis and activity-dependent neurotransmitter release as well as fast endocytosis that mediates rapid reuse of synaptic vesicles. Modulates the gating characteristics of the delayed rectifier voltage-dependent potassium channel KCNB1. The protein is Vesicle-associated membrane protein 2 (VAMP2) of Bos taurus (Bovine).